Consider the following 197-residue polypeptide: Dephospho-CoA kinase (197 aa).

Residues R4–A197 enclose the DPCK domain. G12–T17 provides a ligand contact to ATP.

The protein belongs to the CoaE family.

The protein resides in the cytoplasm. The catalysed reaction is 3'-dephospho-CoA + ATP = ADP + CoA + H(+). It functions in the pathway cofactor biosynthesis; coenzyme A biosynthesis; CoA from (R)-pantothenate: step 5/5. Functionally, catalyzes the phosphorylation of the 3'-hydroxyl group of dephosphocoenzyme A to form coenzyme A. This is Dephospho-CoA kinase from Ruegeria pomeroyi (strain ATCC 700808 / DSM 15171 / DSS-3) (Silicibacter pomeroyi).